Here is a 160-residue protein sequence, read N- to C-terminus: Eosinophil cationic protein (160 aa).

The first 27 residues, 1–27, serve as a signal peptide directing secretion; the sequence is MVPKLFTSQICLLLLLGLSGVGGSLHA. A required for nearly all of the bactericidal activities; partially involved in LPS-binding region spans residues 28 to 72; the sequence is KPRQFTRAQWFAIQHVSLNPPQCTTAMRVINNYQRRCKDQNTFLR. The Proton acceptor role is filled by His-42. 4 disulfide bridges follow: Cys-50-Cys-110, Cys-64-Cys-123, Cys-82-Cys-138, and Cys-89-Cys-98. A 3'-nitrotyrosine modification is found at Tyr-60. 65–69 provides a ligand contact to substrate; that stretch reads KDQNT. 4 N-linked (GlcNAc...) asparagine glycosylation sites follow: Asn-86, Asn-92, Asn-111, and Asn-119. His-155 (proton donor) is an active-site residue.

This sequence belongs to the pancreatic ribonuclease family. As to quaternary structure, interacts with bacterial lipopolysaccharide (LPS) and lipoteichoic acid (LTA). In vitro interacts with phospholipid bilayers.

It is found in the secreted. Functionally, cytotoxin and helminthotoxin with low-efficiency ribonuclease activity. Possesses a wide variety of biological activities. Exhibits antibacterial activity. This chain is Eosinophil cationic protein (RNASE3), found in Pongo pygmaeus (Bornean orangutan).